The chain runs to 297 residues: Tyrosine recombinase XerC (297 aa).

A Core-binding (CB) domain is found at 1-84; it reads MEEIQVTFLN…TLRTFYEFWM (84 aa). The Tyr recombinase domain maps to 105 to 286; the sequence is YLPQFFYEEE…SNQQLRKVYL (182 aa). Catalysis depends on residues arginine 145, lysine 169, histidine 238, arginine 241, and histidine 264. Catalysis depends on tyrosine 273, which acts as the O-(3'-phospho-DNA)-tyrosine intermediate.

It belongs to the 'phage' integrase family. XerC subfamily. As to quaternary structure, forms a cyclic heterotetrameric complex composed of two molecules of XerC and two molecules of XerD.

It is found in the cytoplasm. Functionally, site-specific tyrosine recombinase, which acts by catalyzing the cutting and rejoining of the recombining DNA molecules. The XerC-XerD complex is essential to convert dimers of the bacterial chromosome into monomers to permit their segregation at cell division. It also contributes to the segregational stability of plasmids. The sequence is that of Tyrosine recombinase XerC from Staphylococcus haemolyticus (strain JCSC1435).